Consider the following 521-residue polypeptide: ATP synthase subunit beta (521 aa).

Composition is skewed to low complexity over residues 1–21 (MAKA…AAKA) and 28–42 (PKTT…TKSG). The interval 1-42 (MAKAATPKTTAAAEAKPAAKAPAKKAAPKTTAAAKPAATKSG) is disordered. 199-206 (GGAGVGKT) lines the ATP pocket.

Belongs to the ATPase alpha/beta chains family. In terms of assembly, F-type ATPases have 2 components, CF(1) - the catalytic core - and CF(0) - the membrane proton channel. CF(1) has five subunits: alpha(3), beta(3), gamma(1), delta(1), epsilon(1). CF(0) has three main subunits: a(1), b(2) and c(9-12). The alpha and beta chains form an alternating ring which encloses part of the gamma chain. CF(1) is attached to CF(0) by a central stalk formed by the gamma and epsilon chains, while a peripheral stalk is formed by the delta and b chains.

It is found in the cell inner membrane. The enzyme catalyses ATP + H2O + 4 H(+)(in) = ADP + phosphate + 5 H(+)(out). Produces ATP from ADP in the presence of a proton gradient across the membrane. The catalytic sites are hosted primarily by the beta subunits. This is ATP synthase subunit beta from Brucella canis (strain ATCC 23365 / NCTC 10854 / RM-666).